The following is a 243-amino-acid chain: UPF0702 transmembrane protein YkjA (243 aa).

Transmembrane regions (helical) follow at residues 3-23 (WMVW…YILF), 34-54 (MNNF…EPIL), and 58-78 (LPMS…MSKL).

It belongs to the UPF0702 family.

It is found in the cell membrane. The sequence is that of UPF0702 transmembrane protein YkjA (ykjA) from Bacillus subtilis (strain 168).